The chain runs to 609 residues: MSIIQARCIGNLTRRSIVNVMSRRFQSLGPNPQEVYTKISDTKDPKRDKFFQYSWGSWLKDNEKQRAKRTTRFSIEGATKLIANLIKEKSDGTVKSPISKNGSSILSHNILSKTIGNDTNVTIKSISSIHEGKHHRVYKISLSSDKQLVLRLPYRLESDVAISQKIKSEVATMDFLDLKLKLNVPKVLAYGPDRSNDLEHPFILMEYIEGDLLMKQWEPMSKDEETVKSVITPIADFHSKVISVEFNKFGSLYFDKDVASEHRLDAAYEGEENESLSGRWRIGPSVEKPFSKRKNKLSAKTVAQHNGPWKADEPLQLITSVTEIELENLKNRLALSQADAGSDLENQENLKKQITTFEHLKVMGPKLLNPKSKSIMNAEELFKPRLYVPDLDPMNAIINVNRDNEPYFLDFEYSTIKPFILSNYPPFVAYHGAKVYDLENDIPGYADMDEVEKQQYEFMFYKTRNERIWENDLNSRRHDLIAVASPHIKVLRSPYTQVLEYRNDQDYLYVEACIVQLQAMWEAYVANELCNSSDAKFPIEYSKEYLDKHTQALNQYQADIVSTPFAATDGWVPQDMFDQLLEQGILVEENGEYKVATEKVLKPEEGETQ.

Residues 1-24 (MSIIQARCIGNLTRRSIVNVMSRR) constitute a mitochondrion transit peptide.

This sequence belongs to the AIM9 family.

The protein resides in the mitochondrion. In Meyerozyma guilliermondii (strain ATCC 6260 / CBS 566 / DSM 6381 / JCM 1539 / NBRC 10279 / NRRL Y-324) (Yeast), this protein is Altered inheritance of mitochondria protein 9, mitochondrial (AIM9).